Here is a 476-residue protein sequence, read N- to C-terminus: ATP synthase subunit beta 2 (476 aa).

160–167 (GGAGVGKT) contacts ATP.

The protein belongs to the ATPase alpha/beta chains family. F-type ATPases have 2 components, CF(1) - the catalytic core - and CF(0) - the membrane proton channel. CF(1) has five subunits: alpha(3), beta(3), gamma(1), delta(1), epsilon(1). CF(0) has four main subunits: a(1), b(1), b'(1) and c(9-12).

It localises to the cell inner membrane. The catalysed reaction is ATP + H2O + 4 H(+)(in) = ADP + phosphate + 5 H(+)(out). Produces ATP from ADP in the presence of a proton gradient across the membrane. The catalytic sites are hosted primarily by the beta subunits. This chain is ATP synthase subunit beta 2, found in Bradyrhizobium sp. (strain BTAi1 / ATCC BAA-1182).